A 203-amino-acid chain; its full sequence is Holliday junction branch migration complex subunit RuvA (203 aa).

Residues 1-63 (MYEYLKGLVT…DTDITLFGFY (63 aa)) form a domain I region. The domain II stretch occupies residues 64 to 142 (DLDEKQLFQK…DLEQSATLVG (79 aa)). The interval 143–153 (QTAIDLGSQGD) is flexible linker. Residues 153–203 (DSPELSDALAALSALGYSAREVKAITPKLTDFAAQTTDQYLREGLRLLMKK) form a domain III region.

The protein belongs to the RuvA family. In terms of assembly, homotetramer. Forms an RuvA(8)-RuvB(12)-Holliday junction (HJ) complex. HJ DNA is sandwiched between 2 RuvA tetramers; dsDNA enters through RuvA and exits via RuvB. An RuvB hexamer assembles on each DNA strand where it exits the tetramer. Each RuvB hexamer is contacted by two RuvA subunits (via domain III) on 2 adjacent RuvB subunits; this complex drives branch migration. In the full resolvosome a probable DNA-RuvA(4)-RuvB(12)-RuvC(2) complex forms which resolves the HJ.

The protein localises to the cytoplasm. In terms of biological role, the RuvA-RuvB-RuvC complex processes Holliday junction (HJ) DNA during genetic recombination and DNA repair, while the RuvA-RuvB complex plays an important role in the rescue of blocked DNA replication forks via replication fork reversal (RFR). RuvA specifically binds to HJ cruciform DNA, conferring on it an open structure. The RuvB hexamer acts as an ATP-dependent pump, pulling dsDNA into and through the RuvAB complex. HJ branch migration allows RuvC to scan DNA until it finds its consensus sequence, where it cleaves and resolves the cruciform DNA. The chain is Holliday junction branch migration complex subunit RuvA from Latilactobacillus sakei subsp. sakei (strain 23K) (Lactobacillus sakei subsp. sakei).